The sequence spans 295 residues: Bifunctional protein FolD (295 aa).

Residues 166 to 168 (GRS), Ser191, and Ile232 contribute to the NADP(+) site.

The protein belongs to the tetrahydrofolate dehydrogenase/cyclohydrolase family. In terms of assembly, homodimer.

It catalyses the reaction (6R)-5,10-methylene-5,6,7,8-tetrahydrofolate + NADP(+) = (6R)-5,10-methenyltetrahydrofolate + NADPH. It carries out the reaction (6R)-5,10-methenyltetrahydrofolate + H2O = (6R)-10-formyltetrahydrofolate + H(+). It participates in one-carbon metabolism; tetrahydrofolate interconversion. Functionally, catalyzes the oxidation of 5,10-methylenetetrahydrofolate to 5,10-methenyltetrahydrofolate and then the hydrolysis of 5,10-methenyltetrahydrofolate to 10-formyltetrahydrofolate. In Wolbachia sp. subsp. Brugia malayi (strain TRS), this protein is Bifunctional protein FolD.